A 346-amino-acid chain; its full sequence is Cytidine deaminase 5 (346 aa).

CMP/dCMP-type deaminase domains lie at 20 to 148 (TDHK…FGSE) and 183 to 304 (DLCS…ITGA). Position 58-60 (58-60 (NVE)) interacts with substrate. H71 provides a ligand contact to Zn(2+). E73 functions as the Proton donor in the catalytic mechanism. 2 residues coordinate Zn(2+): C104 and C107.

It belongs to the cytidine and deoxycytidylate deaminase family. As to quaternary structure, homodimer. Zn(2+) serves as cofactor.

The enzyme catalyses cytidine + H2O + H(+) = uridine + NH4(+). It carries out the reaction 2'-deoxycytidine + H2O + H(+) = 2'-deoxyuridine + NH4(+). Functionally, this enzyme scavenges exogenous and endogenous cytidine and 2'-deoxycytidine for UMP synthesis. The chain is Cytidine deaminase 5 (CDA5) from Arabidopsis thaliana (Mouse-ear cress).